The sequence spans 388 residues: Transposase for insertion sequence element IS406 (388 aa).

This sequence belongs to the transposase mutator family.

Required for the transposition of the insertion element. The sequence is that of Transposase for insertion sequence element IS406 from Burkholderia multivorans (strain ATCC 17616 / 249).